The primary structure comprises 174 residues: NADH-ubiquinone oxidoreductase chain 6 (174 aa).

The next 6 membrane-spanning stretches (helical) occupy residues 1-21, 24-44, 47-67, 86-106, 111-131, and 151-171; these read MTYA…GFSS, SPIY…AVIL, GGGY…MVVF, VEVL…VLWV, GVVV…EGEG, and WLVV…IEIA.

The protein belongs to the complex I subunit 6 family. As to quaternary structure, core subunit of respiratory chain NADH dehydrogenase (Complex I) which is composed of 45 different subunits.

The protein resides in the mitochondrion inner membrane. It carries out the reaction a ubiquinone + NADH + 5 H(+)(in) = a ubiquinol + NAD(+) + 4 H(+)(out). Its function is as follows. Core subunit of the mitochondrial membrane respiratory chain NADH dehydrogenase (Complex I) which catalyzes electron transfer from NADH through the respiratory chain, using ubiquinone as an electron acceptor. Essential for the catalytic activity and assembly of complex I. This is NADH-ubiquinone oxidoreductase chain 6 (MT-ND6) from Pongo abelii (Sumatran orangutan).